The following is a 188-amino-acid chain: Abscisic acid receptor PYL8 (188 aa).

Residues 25–176 form an START-like region; the sequence is HELVDNQCSS…NLKSLADISE (152 aa). C32 and C157 are oxidised to a cystine. K61 contributes to the abscisate binding site. T77 carries the phosphothreonine; by CARK1 modification. The short motif at 85–89 is the Gate loop element; that stretch reads SGLPA. Residues 89–94, 116–122, and E141 each bind abscisate; these read ATRSTE and RLKNYSS. A Latch loop motif is present at residues 115–117; sequence HRL.

It belongs to the PYR/PYL/RCAR abscisic acid intracellular receptor family. As to quaternary structure, monomer. Homodimer. Binds ABA on one subunit only. interacts with ABI1 and HAB1, and possibly with other PP2Cs. Binds to CARs protein in an ABA-independent manner, both at the plasma membrane and in the nucleus. Interacts directly with CAR1 and CAR4. Interacts with MYB44, MYB73 and MYB77 in an ABA-independent manner. Interacts with DDA1. Interacts with CARK1 in the cytosol. Binds to ABI1 when phosphorylated by CARK1. Interacts with AIP1 in the nucleus. Post-translationally, phosphorylated by CARK1 especially in response to abscisic acid (ABA); this phosphorylation promotes its stability and inhibitory ability to ABI1. In terms of processing, ubiquitinated in DDA1- and CDD complex-dependent manner. Ubiquitination leads to its subsequent proteasomal degradation.

The protein localises to the cytoplasm. Its subcellular location is the cytosol. It localises to the nucleus. The protein resides in the cell membrane. In terms of biological role, receptor for abscisic acid (ABA) required for ABA-mediated responses such as stomatal closure and germination inhibition. Inhibits the activity of group-A protein phosphatases type 2C (PP2Cs) in an ABA-independent manner but more efficiently when activated by ABA. Confers enhanced sensitivity to ABA. Can be activated by both (-)-ABA and (+)-ABA. Mediates crosstalk between ABA and auxin signaling to regulate lateral root growth. Required for lateral root growth suppression by ABA. In response to auxin, promotes lateral root growth by enhancing MYB77-dependent transcription of the auxin-responsive gene IAA19. Enhances the abilities of MYB44 and MYB73 to activate IAA19 gene. This chain is Abscisic acid receptor PYL8, found in Arabidopsis thaliana (Mouse-ear cress).